A 619-amino-acid polypeptide reads, in one-letter code: Chaperone protein HscA homolog (619 aa).

It belongs to the heat shock protein 70 family.

In terms of biological role, chaperone involved in the maturation of iron-sulfur cluster-containing proteins. Has a low intrinsic ATPase activity which is markedly stimulated by HscB. This Methylococcus capsulatus (strain ATCC 33009 / NCIMB 11132 / Bath) protein is Chaperone protein HscA homolog.